The primary structure comprises 445 residues: Adenylyltransferase and sulfurtransferase MOCS3 (445 aa).

Positions 49–70 are disordered; the sequence is LPPSAAAEVEPTGSPSSSSSAA. ATP-binding positions include Gly-106, Asp-127, 134 to 138, Lys-151, and 170 to 171; these read DNLHR and NN. Cys-211 and Cys-214 together coordinate Zn(2+). Cys-228 functions as the Glycyl thioester intermediate; for adenylyltransferase activity in the catalytic mechanism. The Zn(2+) site is built by Cys-286 and Cys-289. Positions 342–443 constitute a Rhodanese domain; it reads SGRPHLLVDV…WAKEVDPSFL (102 aa). Residue Cys-403 is the Cysteine persulfide intermediate; for sulfurtransferase activity of the active site.

It in the N-terminal section; belongs to the HesA/MoeB/ThiF family. UBA4 subfamily. It depends on Zn(2+) as a cofactor.

The protein localises to the cytoplasm. Its subcellular location is the cytosol. It catalyses the reaction [molybdopterin-synthase sulfur-carrier protein]-C-terminal Gly-Gly + ATP + H(+) = [molybdopterin-synthase sulfur-carrier protein]-C-terminal Gly-Gly-AMP + diphosphate. The enzyme catalyses [molybdopterin-synthase sulfur-carrier protein]-C-terminal Gly-Gly-AMP + S-sulfanyl-L-cysteinyl-[cysteine desulfurase] + AH2 = [molybdopterin-synthase sulfur-carrier protein]-C-terminal-Gly-aminoethanethioate + L-cysteinyl-[cysteine desulfurase] + A + AMP + 2 H(+). The protein operates within tRNA modification; 5-methoxycarbonylmethyl-2-thiouridine-tRNA biosynthesis. Its pathway is cofactor biosynthesis; molybdopterin biosynthesis. Plays a central role in 2-thiolation of mcm(5)S(2)U at tRNA wobble positions of cytosolic tRNA(Lys), tRNA(Glu) and tRNA(Gln). Also essential during biosynthesis of the molybdenum cofactor. Acts by mediating the C-terminal thiocarboxylation of sulfur carriers URM1 and MOCS2A. Its N-terminus first activates URM1 and MOCS2A as acyl-adenylates (-COAMP), then the persulfide sulfur on the catalytic cysteine is transferred to URM1 and MOCS2A to form thiocarboxylation (-COSH) of their C-terminus. The reaction probably involves hydrogen sulfide that is generated from the persulfide intermediate and that acts as a nucleophile towards URM1 and MOCS2A. Subsequently, a transient disulfide bond is formed. Does not use thiosulfate as sulfur donor; NFS1 probably acting as a sulfur donor for thiocarboxylation reactions. This is Adenylyltransferase and sulfurtransferase MOCS3 from Oryza sativa subsp. japonica (Rice).